The chain runs to 503 residues: Aromatase (503 aa).

A run of 2 helical transmembrane segments spans residues 19-39 (EAMP…LLVW) and 303-323 (MLIA…FLIA). Positions 309 and 374 each coordinate substrate. Cys437 is a heme binding site.

This sequence belongs to the cytochrome P450 family. Requires heme as cofactor. Post-translationally, phosphorylated in vitro by PKA and PKG/PRKG1. These phosphorylations inhibit the catalytic activity as measured by estrone synthesis from androstenedione (36% decrease for PKA and 30% for PKG/PRKG1). Widely expressed, including in adult and fetal brain, placenta, skin fibroblasts, adipose tissue and gonads.

The protein localises to the endoplasmic reticulum membrane. It localises to the microsome membrane. It carries out the reaction testosterone + 3 reduced [NADPH--hemoprotein reductase] + 3 O2 = 17beta-estradiol + formate + 3 oxidized [NADPH--hemoprotein reductase] + 4 H2O + 4 H(+). The catalysed reaction is androst-4-ene-3,17-dione + 3 reduced [NADPH--hemoprotein reductase] + 3 O2 = estrone + formate + 3 oxidized [NADPH--hemoprotein reductase] + 4 H2O + 4 H(+). It catalyses the reaction androst-4-ene-3,17-dione + reduced [NADPH--hemoprotein reductase] + O2 = 19-hydroxyandrost-4-ene-3,17-dione + oxidized [NADPH--hemoprotein reductase] + H2O + H(+). The enzyme catalyses 19-hydroxyandrost-4-ene-3,17-dione + reduced [NADPH--hemoprotein reductase] + O2 = 19-oxo-androst-4-ene-3,17-dione + oxidized [NADPH--hemoprotein reductase] + 2 H2O + H(+). It carries out the reaction 19-oxo-androst-4-ene-3,17-dione + reduced [NADPH--hemoprotein reductase] + O2 = estrone + formate + oxidized [NADPH--hemoprotein reductase] + H2O + 2 H(+). The catalysed reaction is estrone + reduced [NADPH--hemoprotein reductase] + O2 = 2-hydroxyestrone + oxidized [NADPH--hemoprotein reductase] + H2O + H(+). It catalyses the reaction 17beta-hydroxy-5alpha-androstan-3-one + reduced [NADPH--hemoprotein reductase] + O2 = 17beta,19-dihydroxy-3-oxo-5alpha-androstanone + oxidized [NADPH--hemoprotein reductase] + H2O + H(+). The enzyme catalyses 17beta,19-dihydroxy-3-oxo-5alpha-androstanone + reduced [NADPH--hemoprotein reductase] + O2 = 17beta-hydroxy-3,19-dioxo-5alpha-androstanone + oxidized [NADPH--hemoprotein reductase] + 2 H2O + H(+). It carries out the reaction 17beta-hydroxy-3,19-dioxo-5alpha-androstanone + reduced [NADPH--hemoprotein reductase] + O2 = 17beta-hydroxy-3-oxo-19-nor-5alpha-androst-1-ene + formate + oxidized [NADPH--hemoprotein reductase] + H2O + 2 H(+). It functions in the pathway steroid hormone biosynthesis. A cytochrome P450 monooxygenase that catalyzes the conversion of C19 androgens, androst-4-ene-3,17-dione (androstenedione) and testosterone to the C18 estrogens, estrone and estradiol, respectively. Catalyzes three successive oxidations of C19 androgens: two conventional oxidations at C19 yielding 19-hydroxy and 19-oxo/19-aldehyde derivatives, followed by a third oxidative aromatization step that involves C1-beta hydrogen abstraction combined with cleavage of the C10-C19 bond to yield a phenolic A ring and formic acid. Alternatively, the third oxidative reaction yields a 19-norsteroid and formic acid. Converts dihydrotestosterone to delta1,10-dehydro 19-nordihydrotestosterone and may play a role in homeostasis of this potent androgen. Also displays 2-hydroxylase activity toward estrone. Mechanistically, uses molecular oxygen inserting one oxygen atom into a substrate, and reducing the second into a water molecule, with two electrons provided by NADPH via cytochrome P450 reductase (CPR; NADPH-ferrihemoprotein reductase). This chain is Aromatase, found in Homo sapiens (Human).